We begin with the raw amino-acid sequence, 355 residues long: Putative early 40.3 kDa protein (355 aa).

Its function is as follows. This protein is required for viral late gene expression. The polypeptide is Putative early 40.3 kDa protein (DA41) (Orgyia pseudotsugata multicapsid polyhedrosis virus (OpMNPV)).